A 247-amino-acid chain; its full sequence is 3-deoxy-manno-octulosonate cytidylyltransferase (247 aa).

The protein belongs to the KdsB family.

It is found in the cytoplasm. It carries out the reaction 3-deoxy-alpha-D-manno-oct-2-ulosonate + CTP = CMP-3-deoxy-beta-D-manno-octulosonate + diphosphate. It participates in nucleotide-sugar biosynthesis; CMP-3-deoxy-D-manno-octulosonate biosynthesis; CMP-3-deoxy-D-manno-octulosonate from 3-deoxy-D-manno-octulosonate and CTP: step 1/1. The protein operates within bacterial outer membrane biogenesis; lipopolysaccharide biosynthesis. In terms of biological role, activates KDO (a required 8-carbon sugar) for incorporation into bacterial lipopolysaccharide in Gram-negative bacteria. The protein is 3-deoxy-manno-octulosonate cytidylyltransferase of Rhodopseudomonas palustris (strain BisA53).